A 429-amino-acid polypeptide reads, in one-letter code: RNA-binding protein BRN2 (429 aa).

RRM domains lie at 12 to 93 (VKLF…YADG), 100 to 180 (HKLF…WADT), and 330 to 408 (ANLF…LKRD). Positions 410–429 (GQQQQQQQSKNPLFNGLLNS) are disordered. A compositionally biased stretch (polar residues) spans 418–429 (SKNPLFNGLLNS).

Expressed in roots, stems, flowers and siliques.

It localises to the cytoplasm. Its function is as follows. RNA-binding protein involved in the regulation of flowering time. Acts as a repressor of the activity of SOC1, a transcriptional activator of flowering time. Binds to the 3'-UTR of SOC1 mRNA in the cytoplasm and participates in SOC1 mRNA decay, mediated by the distal region of the SOC1 3'-UTR. This Arabidopsis thaliana (Mouse-ear cress) protein is RNA-binding protein BRN2.